The primary structure comprises 415 residues: ATP-dependent Clp protease ATP-binding subunit ClpX (415 aa).

The ClpX-type ZB domain occupies 1–53 (MLRSKGDLVLGCSFCGKKEDERRRIVTGHGVSICNYCVERCAEYLRDRKPSAL). Zn(2+) is bound by residues Cys12, Cys15, Cys34, and Cys37. 118–125 (PTGSGKTL) provides a ligand contact to ATP.

It belongs to the ClpX chaperone family. Component of the ClpX-ClpP complex. Forms a hexameric ring that, in the presence of ATP, binds to fourteen ClpP subunits assembled into a disk-like structure with a central cavity, resembling the structure of eukaryotic proteasomes.

Functionally, ATP-dependent specificity component of the Clp protease. It directs the protease to specific substrates. Can perform chaperone functions in the absence of ClpP. The protein is ATP-dependent Clp protease ATP-binding subunit ClpX of Treponema pallidum (strain Nichols).